We begin with the raw amino-acid sequence, 24 residues long: Brevinin-1Ecb (24 aa).

The cysteines at positions 18 and 24 are disulfide-linked.

Expressed by the skin glands.

It localises to the secreted. Its function is as follows. Shows antibacterial activity against representative Gram-negative and Gram-positive bacterial species, and hemolytic activity. The polypeptide is Brevinin-1Ecb (Pelophylax ridibundus (Marsh frog)).